A 394-amino-acid chain; its full sequence is Guanine nucleotide-binding protein G(s) subunit alpha (394 aa).

A disordered region spans residues 1–25; that stretch reads MGCLGDSKTEDQRNEEKAQREANKK. Glycine 2 carries the N-palmitoyl glycine lipid modification. Cysteine 3 is lipidated: S-palmitoyl cysteine. Residues 7–25 show a composition bias toward basic and acidic residues; that stretch reads SKTEDQRNEEKAQREANKK. Positions 39 to 394 constitute a G-alpha domain; the sequence is ATHRLLLLGA…RMHLRQYELL (356 aa). Residues 42-55 form a G1 motif region; sequence RLLLLGAGESGKST. Residue 47–55 coordinates GTP; sequence GAGESGKST. Serine 54 serves as a coordination point for Mg(2+). The tract at residues 68-90 is disordered; the sequence is FNGEGGEEDPQAARSNSDGEKAT. Residues 196 to 204 form a G2 motif region; that stretch reads DLLRCRVLT. Residues 197–204, 223–227, 292–295, and alanine 366 each bind GTP; these read LLRCRVLT, DVGGQ, and NKQD. A Mg(2+)-binding site is contributed by threonine 204. The tract at residues 219–228 is G3 motif; it reads FHMFDVGGQR. The interval 288–295 is G4 motif; it reads ILFLNKQD. Residues 364–369 are G5 motif; the sequence is TCAVDT.

This sequence belongs to the G-alpha family. G(s) subfamily. Heterotrimeric G proteins are composed of 3 units; alpha, beta and gamma. The alpha chain contains the guanine nucleotide binding site. Interacts with CRY1; the interaction may block GPCR-mediated regulation of cAMP concentrations. Interacts with ADCY6 and stimulates its adenylyl cyclase activity. Interacts with ADCY2 and ADCY5. Stimulates the ADCY5 adenylyl cyclase activity. Interaction with SASH1.

The protein resides in the cell membrane. Guanine nucleotide-binding proteins (G proteins) function as transducers in numerous signaling pathways controlled by G protein-coupled receptors (GPCRs). Signaling involves the activation of adenylyl cyclases, resulting in increased levels of the signaling molecule cAMP. GNAS functions downstream of several GPCRs, including beta-adrenergic receptors. Stimulates the Ras signaling pathway via RAPGEF2. The polypeptide is Guanine nucleotide-binding protein G(s) subunit alpha (GNAS) (Cricetulus longicaudatus (Long-tailed dwarf hamster)).